The primary structure comprises 132 residues: UPF0102 protein Ajs_0414 (132 aa).

The segment at 1-23 (MGFLGKKVNGSAPARTTRAAGQA) is disordered.

The protein belongs to the UPF0102 family.

In Acidovorax sp. (strain JS42), this protein is UPF0102 protein Ajs_0414.